We begin with the raw amino-acid sequence, 497 residues long: Acetyl-coenzyme A carboxylase carboxyl transferase subunit beta (497 aa).

The 273-residue stretch at 217–489 (LWLQCDNCYG…NQNSNQYSQY (273 aa)) folds into the CoA carboxyltransferase N-terminal domain. Residues Cys-221, Cys-224, Cys-240, and Cys-243 each coordinate Zn(2+). Residues 221 to 243 (CDNCYGLNYKKVLKSKMTICEQC) form a C4-type zinc finger.

It belongs to the AccD/PCCB family. In terms of assembly, acetyl-CoA carboxylase is a heterohexamer composed of biotin carboxyl carrier protein, biotin carboxylase and 2 subunits each of ACCase subunit alpha and ACCase plastid-coded subunit beta (accD). Zn(2+) serves as cofactor.

The protein resides in the plastid. The enzyme catalyses N(6)-carboxybiotinyl-L-lysyl-[protein] + acetyl-CoA = N(6)-biotinyl-L-lysyl-[protein] + malonyl-CoA. The protein operates within lipid metabolism; malonyl-CoA biosynthesis; malonyl-CoA from acetyl-CoA: step 1/1. In terms of biological role, component of the acetyl coenzyme A carboxylase (ACC) complex. Biotin carboxylase (BC) catalyzes the carboxylation of biotin on its carrier protein (BCCP) and then the CO(2) group is transferred by the transcarboxylase to acetyl-CoA to form malonyl-CoA. The chain is Acetyl-coenzyme A carboxylase carboxyl transferase subunit beta from Cuscuta reflexa (Southern Asian dodder).